The primary structure comprises 584 residues: Keratin, type I cytoskeletal 10 (584 aa).

A compositionally biased stretch (low complexity) spans 1–15; that stretch reads MSVRYSSSKHYSSSR. The segment at 1-24 is disordered; the sequence is MSVRYSSSKHYSSSRSGGGGGGGG. The tract at residues 1–145 is head; sequence MSVRYSSSKH…GGDGGLLSGN (145 aa). Residues Ser-14, Ser-16, Ser-42, Ser-53, Ser-56, and Ser-170 each carry the phosphoserine modification. Residues 146–181 form a coil 1A region; the sequence is EKVTMQNLNDRLASYLDKVRALEESNYELEGKIKEW. The IF rod domain occupies 146-460; the sequence is EKVTMQNLND…SLLEGEGSSG (315 aa). Residues 182–202 are linker 1; that stretch reads YEKHGNSHQGEPRDYSKYYKT. Residues 203-294 are coil 1B; the sequence is IDDLKNQILN…KNHEEEMKDL (92 aa). Residues 295–317 form a linker 12 region; sequence RNVSTGDVNVEMNAAPGVDLTQL. The coil 2 stretch occupies residues 318–456; that stretch reads LNNMRSQYEQ…QTYRSLLEGE (139 aa). The interval 453 to 584 is disordered; the sequence is LEGEGSSGGG…GESSSKGPRY (132 aa). The segment covering 457–563 has biased composition (gly residues); that stretch reads GSSGGGGRGG…GGGYGGGSSS (107 aa). A tail region spans residues 457-584; sequence GSSGGGGRGG…GESSSKGPRY (128 aa). Over residues 564–584 the composition is skewed to low complexity; the sequence is GGHKSSSSGSVGESSSKGPRY.

It belongs to the intermediate filament family. In terms of assembly, heterotetramer of two type I and two type II keratins. Heterodimer with KRT1. Two heterodimers of KRT1 and KRT10 form a heterotetramer. The KRT10 subunit in the heterotetramer is probably disulfide-linked. Interacts with PLEC isoform 1C, when in a heterodimer with KRT1. As to quaternary structure, (Microbial infection) Interacts (via C-terminal tail domain) with the S.aureus clumping factor, clfB; this interaction probably mediates S.aureus attachment to the keratinized squamous epithelial cells from the nasal cavity. (Microbial infection) Interacts (via the C-terminal tail domain) with S.pneumoniae serine-rich repeat protein PsrP; this interaction probably mediates S.pneumoniae adherence to lung tissue and subsequent pathogenesis. Neither protein has to be glycosylated for the interaction to occur. As to expression, seen in all suprabasal cell layers including stratum corneum. Expressed on the surface of lung cell lines. Localized on the surface of desquamated nasal epithelial cells (at protein level).

The protein resides in the secreted. It is found in the extracellular space. It localises to the cell surface. The protein localises to the cytoplasm. Its function is as follows. Plays a role in the establishment of the epidermal barrier on plantar skin. Involved in the maintenance of cell layer development and keratin filament bundles in suprabasal cells of the epithelium. (Microbial infection) Acts as a mediator of S.aureus adherence to desquamated nasal epithelial cells via clfB, and hence may play a role in nasal colonization. Functionally, (Microbial infection) Binds S.pneumoniae PsrP, mediating adherence of the bacteria to lung cell lines. Reduction of levels of KRT10 keratin decrease adherence, overexpression increases adherence. Neither protein has to be glycosylated for the interaction to occur. This is Keratin, type I cytoskeletal 10 (KRT10) from Homo sapiens (Human).